Reading from the N-terminus, the 256-residue chain is uncharacterized protein (256 aa).

Disordered regions lie at residues 1–38 and 51–75; these read MGKT…PNRD and PRPS…RCPQ.

This is an uncharacterized protein from Homo sapiens (Human).